We begin with the raw amino-acid sequence, 37 residues long: Esculentin-2Rb (37 aa).

Cys31 and Cys37 are disulfide-bonded.

As to expression, expressed by the skin glands.

The protein localises to the secreted. Its function is as follows. Antimicrobial peptide. In Pelophylax ridibundus (Marsh frog), this protein is Esculentin-2Rb.